Here is a 448-residue protein sequence, read N- to C-terminus: Trigger factor (448 aa).

Positions 161-246 (GDQVTIDFEG…VHKVAGKQLP (86 aa)) constitute a PPIase FKBP-type domain. The disordered stretch occupies residues 428-448 (ALQAAQQQEGAEEEAQEETSA). Acidic residues predominate over residues 437–448 (GAEEEAQEETSA).

This sequence belongs to the FKBP-type PPIase family. Tig subfamily.

The protein resides in the cytoplasm. The enzyme catalyses [protein]-peptidylproline (omega=180) = [protein]-peptidylproline (omega=0). Its function is as follows. Involved in protein export. Acts as a chaperone by maintaining the newly synthesized protein in an open conformation. Functions as a peptidyl-prolyl cis-trans isomerase. In Chromohalobacter salexigens (strain ATCC BAA-138 / DSM 3043 / CIP 106854 / NCIMB 13768 / 1H11), this protein is Trigger factor.